The sequence spans 447 residues: Gustatory receptor family protein 3 (447 aa).

Over 1-69 (MTITASNTLE…HTHSSARNTM (69 aa)) the chain is Extracellular. Residues 70-90 (FKWPLTIYNYLTLAILTAATI) traverse the membrane as a helical segment. Residues 91-116 (RRISQIKQKSATNEEKDAAFHVLNPT) lie on the Cytoplasmic side of the membrane. Residues 117 to 137 (FVLTLCHALLMFSGLAAGFLL) traverse the membrane as a helical segment. At 138-171 (LKLQKQREKMYHVLDQGLGRNRNEEHDSHHFKLN) the chain is on the extracellular side. A helical membrane pass occupies residues 172 to 192 (KLFISISFSFAAALSFVQIAT). Topologically, residues 193–211 (KMRYLDLPDTPDLINRKIY) are cytoplasmic. The chain crosses the membrane as a helical span at residues 212–232 (FVILEGYVIFIASSCISLVAI). The Extracellular portion of the chain corresponds to 233–292 (LFFQLCRILQFSIGQLIEEMVPKEKEECPLPEQSLQQIHDVQIHYQEISNAKLYIEQNFS). The chain crosses the membrane as a helical span at residues 293–313 (FSLFYTYGCCIPLTCLLGYIA). The Cytoplasmic segment spans residues 314 to 328 (FRNGIQADMAETFSV). Residues 329–349 (AIWLTNTMLALMLFSIPAFMI) traverse the membrane as a helical segment. Over 350–405 (AEEGDKLLTASFKMYHETLCEERDLLVLSQMSFLSFQMHATKLTLTAGNFFMMNRK) the chain is Extracellular. The chain crosses the membrane as a helical span at residues 406–426 (IMISLFSAIFTYFLILVQFDA). The Cytoplasmic segment spans residues 427–447 (EKERAGECNNQSRVLIVQPPV).

It belongs to the insect chemoreceptor superfamily. Gustatory receptor (GR) family. As to expression, expressed in I2 pharyngeal neurons.

The protein resides in the membrane. Its function is as follows. Chemoreceptor involved in light-induced avoidance behavior. Probably acts as a molecular sensor in I2 pharyngeal neurons, required for the inhibition of feeding in response to light and hydrogen peroxide. Involved in circadian rhythms, probably by acting as a light sensor. In contrast to lite-1, does not act as a photoreceptor. This chain is Gustatory receptor family protein 3, found in Caenorhabditis elegans.